Reading from the N-terminus, the 130-residue chain is Small ribosomal subunit protein uS11 (130 aa).

This sequence belongs to the universal ribosomal protein uS11 family. In terms of assembly, part of the 30S ribosomal subunit. Interacts with proteins S7 and S18. Binds to IF-3.

In terms of biological role, located on the platform of the 30S subunit, it bridges several disparate RNA helices of the 16S rRNA. Forms part of the Shine-Dalgarno cleft in the 70S ribosome. The polypeptide is Small ribosomal subunit protein uS11 (Xanthomonas oryzae pv. oryzae (strain MAFF 311018)).